The primary structure comprises 641 residues: MQEEHNYKWVGGRLIYGFGAKGNDAFYSILSGYLIIFITSHLFDTGNKALDNRMVSLVTLIIMVLRIVELFIDPFIGNAIDRTKNSPGHFRPWVVVGGTVSSIILLLLFTNLGGLYAKNAMIYLVVFAILYITMDIFYSFKDVGFWSMLPSLTTDSREREKTATFARLGSTIGGGLVGVLVMPAVIFFSAKATSTGDNRGWFIFALIICLIALISAWGVGLGTREVDSDIRKNKQDTVGVMEIFKALAKNDQLLWAALAYLFYGVGINILGSLEVYYFTYIMGKPKSFSILSIINIFLGLIATSLFPVLSKKFSRKGVFAGCLVFMLGGIAIFTIAGSNLWLVLLAATMFGFPQQMVFLVVLMVITDSVEYGQLKLGHRDESLALSVRPLIDKFGGAISNGVVGQIAIISGMTTGATASSITAAGQLHFKLTMFAFPALMLLIAIGIFSKQIFLTEEKHAEIVAELERTWRTKFDNTTDQVAEKVVTSLDLATPIAGQVIPLAQVNDPTFAAGTLGDGFAIKPSDGRILAPFDATVRQVFTTRHAVGLVGDNGIVLLIHIGLGTVKLRGTGFISYVEEGQHVQQGDELLEFWDPTIKQAGLDDTVIMTVTNSTEFTMMDWLVKPGQAVKATDNILQLHTKA.

The permease stretch occupies residues 1–506 (MQEEHNYKWV…GQVIPLAQVN (506 aa)). 12 helical membrane passes run 25–45 (AFYS…LFDT), 57–77 (LVTL…PFIG), 93–113 (WVVV…TNLG), 120–140 (AMIY…FYSF), 168–188 (LGST…VIFF), 201–221 (WFIF…GVGL), 253–273 (LLWA…LGSL), 288–308 (FSIL…LFPV), 317–337 (GVFA…TIAG), 342–362 (LVLL…LVVL), 394–414 (FGGA…GMTT), and 429–449 (FKLT…GIFS). In terms of domain architecture, PTS EIIA type-1 spans 507–611 (DPTFAAGTLG…DDTVIMTVTN (105 aa)). At H559 the chain carries Phosphohistidine; by HPr.

This sequence in the N-terminal section; belongs to the sodium:galactoside symporter (TC 2.A.2) family.

The protein localises to the cell membrane. This Pediococcus pentosaceus protein is Raffinose carrier protein (rafP).